Consider the following 100-residue polypeptide: Small ribosomal subunit protein uS14c (100 aa).

Belongs to the universal ribosomal protein uS14 family. Part of the 30S ribosomal subunit.

Its subcellular location is the plastid. The protein localises to the chloroplast. Functionally, binds 16S rRNA, required for the assembly of 30S particles. This is Small ribosomal subunit protein uS14c from Huperzia lucidula (Shining clubmoss).